We begin with the raw amino-acid sequence, 1108 residues long: MPHDGKQRSQRIPRSVAAVAGIAGLLLCLAVPLLPVRQTTATVLWPQGTVDGHVSQITAPLVSGAPRALDISIPCPAVATLPADGGLVVSTLPPGGMDAGKNGLFVRANKDVVVVAFRDTVAAVAQRPAVAAGACSVLHAWADAGAAGAEFVGIPGAAGTLPAEKKPQVGGIFTDLKVPAGPGLSARVDIDTRFITAPTVLKQIVMVLGTLAVLTAIVALAVLDRRSRGGGTLINWRSPIAWLSRYRPGTHLANWRRVGLATWIADAAVLATLLLWHVVGATSSDDGYNLTIARVAPKAGYLVDYYRYFGTTDAPFDWYLGLLSRLASVSTAGVWMRLPATLAGIGCWLIISHWVLRRLGPGRGGLAANRVAVFTAGAVFVAAWLPFNNGLRPEPLIALGVLVTWMLVERAIALQRLAPAAVAVVVALLTATLAPQGLIAVAALLTGARAVAQAIRRRRASDGLLAPLAVLAAALSLILVVVFRSQTVATVLESARIKYKVGPTIAWYQDWLRYYFLTVESNPDGSMARRFAVLVMLLCLFGMLVILLRRGHVPGVASGPRWRLIGTTAVGLLLLTFTPTKWAVQFGAFAGLAGALGALTAFACSRIGLHNRRNLTLYVTALLFVLAWATSGINGWFYVGNYGVPWYDIQPVIASHPVTSMFLTLSIITGLLAAWQHFRMDYAGHTEVKDSRRNRVLASTPLLVVATIMVVGEVASLTKGAVFRYPLYTTGKANLAAIASGLSPTSCAMADDVLAEPDANAGMLQPLPGQTFGPDGPLGGVNPVGFKPDGVGDDLQSDPVVTKPGLVNSDASPNKPNVAYSDSAGTAGGKGPVGVNGSHAALPFGLDPARTPVMGSYGENSLAATATSAWYQLPPRTPDRPLVVVSAAGAIWSYKEDGTFTYGQSLKLQWGVARPDGSTVPLAEVQPIDIGPQPAWRNLRFPLAWAPPEANVARIVAYDPNLSSEQWFAFTPPRVPVTETLQQLIGSQTPVMMDIATAANFPCQRPFSEHLGVAELPAYRILPDRKQTAASSNLWQSSEAGGPFLFLQALLRTSTIPTYLRGDWYRDWGSVEQYFRLVPADQAPDAAIEQGVMTVHGWSRQGPIRALP.

Helical transmembrane passes span 12-34 (IPRSVAAVAGIAGLLLCLAVPLL), 204-223 (IVMVLGTLAVLTAIVALAVL), 258-280 (VGLATWIADAAVLATLLLWHVVG), 334-356 (VWMRLPATLAGIGCWLIISHWVL), 368-387 (ANRVAVFTAGAVFVAAWLPF), 397-414 (IALGVLVTWMLVERAIAL), 421-443 (AVAVVVALLTATLAPQGLIAVAA), 463-482 (GLLAPLAVLAAALSLILVVV), 531-553 (FAVLVMLLCLFGMLVILLRRGHV), 582-604 (WAVQFGAFAGLAGALGALTAFAC), 616-638 (TLYVTALLFVLAWATSGINGWFY), 653-675 (IASHPVTSMFLTLSIITGLLAAW), and 696-718 (VLASTPLLVVATIMVVGEVASLT). The disordered stretch occupies residues 804-825 (PGLVNSDASPNKPNVAYSDSAG).

It belongs to the emb family.

It is found in the cell membrane. Functionally, arabinosyl transferase responsible for the polymerization of arabinose into the arabinan of arabinogalactan. This Mycobacterium avium protein is Probable arabinosyltransferase A (embA).